The sequence spans 334 residues: MIPTLTELLDRLHVVALPMRVRFRGITTREVALIDGPAGWGEFGAFLEYQPLEASAWLVAGIEAAYGEPPEGRRDRIPINATVPAVSATQVPEVLARFPGVRTAKVKVAEPGQNLADDVDRVNAVRELVETVRVDANGGWSVEAAAQAAVALTADGPLEYLEQPCATVAELAALRRRVDIPIAADESIRKADDPLAVVRSHAADVAVLKVAPLGGIASFLAIAAQIDIPVVVSSALDSVVGITAGLIAAAALPELDYACGLGTGRLFVADVAEPMLPVDGFLPVGPVTPDPARLQALGTPPARRQWWIDRVKTCYSLLVPCAGDQSGLRRPRDR.

The active-site Proton donor is Lys-107. Positions 135, 162, and 185 each coordinate Mg(2+). The Proton acceptor role is filled by Lys-209.

This sequence belongs to the mandelate racemase/muconate lactonizing enzyme family. MenC type 1 subfamily. Requires a divalent metal cation as cofactor.

The enzyme catalyses (1R,6R)-6-hydroxy-2-succinyl-cyclohexa-2,4-diene-1-carboxylate = 2-succinylbenzoate + H2O. Its pathway is quinol/quinone metabolism; 1,4-dihydroxy-2-naphthoate biosynthesis; 1,4-dihydroxy-2-naphthoate from chorismate: step 4/7. It participates in quinol/quinone metabolism; menaquinone biosynthesis. Its function is as follows. Converts 2-succinyl-6-hydroxy-2,4-cyclohexadiene-1-carboxylate (SHCHC) to 2-succinylbenzoate (OSB). This Mycobacterium leprae (strain TN) protein is o-succinylbenzoate synthase.